Consider the following 71-residue polypeptide: UPF0346 protein SUB0487 (71 aa).

Belongs to the UPF0346 family.

This chain is UPF0346 protein SUB0487, found in Streptococcus uberis (strain ATCC BAA-854 / 0140J).